The chain runs to 34 residues: DDIT3 upstream open reading frame protein (34 aa).

As to quaternary structure, interacts with DDIT3 (isoform 1).

It is found in the nucleus. The protein localises to the cytoplasm. Product of the upstream open reading frame (uORF) of DDIT3/CHOP that is specifically produced in absence of stress, thereby preventing translation of downstream stress effector DDIT3/CHOP. The protein is DDIT3 upstream open reading frame protein of Mus musculus (Mouse).